We begin with the raw amino-acid sequence, 211 residues long: LexA repressor (211 aa).

A DNA-binding region (H-T-H motif) is located at residues 28 to 48; that stretch reads VREVGEAVGLSSSSTIHGHIE. Catalysis depends on for autocatalytic cleavage activity residues serine 132 and lysine 170.

It belongs to the peptidase S24 family. Homodimer.

The catalysed reaction is Hydrolysis of Ala-|-Gly bond in repressor LexA.. Represses a number of genes involved in the response to DNA damage (SOS response), including recA and lexA. In the presence of single-stranded DNA, RecA interacts with LexA causing an autocatalytic cleavage which disrupts the DNA-binding part of LexA, leading to derepression of the SOS regulon and eventually DNA repair. The chain is LexA repressor from Leuconostoc citreum (strain KM20).